A 318-amino-acid chain; its full sequence is Nucleotide-binding protein Jann_0539 (318 aa).

Residue 17–24 coordinates ATP; that stretch reads GPSGAGRS. Residue 64-67 participates in GTP binding; it reads DPRT. Positions 278 to 318 are disordered; the sequence is GWQVSKRHRDVDKDASENSDRDRGASARTAASTDDGEAEQP. Residues 286–302 show a composition bias toward basic and acidic residues; sequence RDVDKDASENSDRDRGA.

This sequence belongs to the RapZ-like family.

Its function is as follows. Displays ATPase and GTPase activities. This Jannaschia sp. (strain CCS1) protein is Nucleotide-binding protein Jann_0539.